The chain runs to 141 residues: MAIERTLSIIKPDAVAKNVIGQIYARFEAAGLKVVAAKMVHLSRGEAEQFYAVHKARPFFKDLVDFMVSGPVMIQALEGESAIAKNRDLMGATDPKKAEKGTIRADFADSIDANAVHGSDAPETAAVEVAFFFPGMNVYSR.

ATP is bound by residues lysine 11, phenylalanine 59, arginine 87, threonine 93, arginine 104, and asparagine 114. The active-site Pros-phosphohistidine intermediate is histidine 117.

Belongs to the NDK family. In terms of assembly, homotetramer. Mg(2+) serves as cofactor.

The protein localises to the cytoplasm. It carries out the reaction a 2'-deoxyribonucleoside 5'-diphosphate + ATP = a 2'-deoxyribonucleoside 5'-triphosphate + ADP. It catalyses the reaction a ribonucleoside 5'-diphosphate + ATP = a ribonucleoside 5'-triphosphate + ADP. In terms of biological role, major role in the synthesis of nucleoside triphosphates other than ATP. The ATP gamma phosphate is transferred to the NDP beta phosphate via a ping-pong mechanism, using a phosphorylated active-site intermediate. The sequence is that of Nucleoside diphosphate kinase from Cupriavidus metallidurans (strain ATCC 43123 / DSM 2839 / NBRC 102507 / CH34) (Ralstonia metallidurans).